The following is a 1432-amino-acid chain: MFDTTKLQSSTQDGSTSSVTGEPIFGANDPNSELNPSSSHFNVRAWASNYAKVTLEGGSQFRRMGVCFQNLNAFGFITPADYQKDVANIWLALPGMLIRNRKRVNILHQFDGIIRPGEMCVVLGPPSSGCSTFLKTLSGDRDGFFIGEDSYFNYEGISDKELHTAHRGDAIYTAETDVHFPKLTVSQTLEFAAQARCPREIPQGIPRQQFCKQLKDVVMGMYGISHTADTKVGNDYIRGVSGGERKRVTIAEATLSNAPLQCWDNCTRGLDSANAIGFCKTLRLQSEFFGQSCAVSMYQAPQSAYDLFDKATVLYQGHQIYFGPADEAKAYFERLGFECPSRQTTPDFLTSMTFPEERITRAGFNPPRTPEEFAAAWRSSPEYKALQTDISEYKTKHPIDGPNAGVYRELKKSYQARGQRIKSPYTLTYMQQVQMCMRRAWNRLVSDPGPTIVVTMGNFVLALIMSSLFFNMQPDTDSFYGREVVLFMAVMFNAFASVLEVMTLYAQRPIVEKQARYAFYHPSAEAYSSVLMDLPIKVLACVSFNLVFYFMTNLNRTPGNFFFYLLASFFIVLSMSGIFRFIKIPSAAFSRTVQQAMIPASILMVFLITFAGFMVPINYMLPWCRWINYLNPVAYGFESLMINEYAGREFRCSNYIPFDGTPGDPNVACNVVGAVAGETFVSGDAHISEAYSYDAAHKWRNIGIVIAMTIFNYTMCFITSEYVSAKKSKGEILVFRRGFVPKNTHVNKITDDLEARSLPVTKIVESPEGSKEKVGGELQSGSTSIFHWRNVCYDIKIKGKPRRILDNVDGWVKPGTMTALMGVSGAGKTTLLDCLADRRTGIGIITGEMLVDGKIRDESFQRKTGYAQQQDLHLETATVRESLVFSALLRRPHHIPKAEKLAYVEEVIDLLEMGPYADAVVGVLGEGLNVEQRKRLTIAVELAAKPPLLLFVDEPTSGLDSQTSWAVVNLLEKLSKAGQSILCTLHQPSAMLFQRFDRLLLLADGGKTVYFGDIGENSSTLVEYFERKAKHPCPPNANPAEWMLEAIGAAPGTTSEVDWQHVWRTSPEFDRVQEELSRLREHGSQSNSHDSEKSETKAVTYHGEFAVPLWTQFVVVIERVFQQSWRTPAYIYSRFALCGVVSLFIGLVFLNSPLSVRGLQNQMFAVFQLFAIVGQLVSQQMPQFIIQRSLYEVRERPAKTYSWKVFMVSQILSDIPYYALASVMMWALWYFPIGLYKNAEVAGQETERGALMWLLFLAWLMWVSTFGHFCISFSETAEAGANAANFMYVLVNFFCGALITPNQMPRFWIFLYRASPLSYLVSSMLSAGIANVEVTCAANEYTIIDPPMGQTCYEYLRNEINTIGGYLLDNNATENCKFCKLKYSNVFLSEIEIEYGTRWRNFGIIWVYVIFNISAAITLYWVARMPKGHRKV.

A compositionally biased stretch (polar residues) spans 1 to 20; that stretch reads MFDTTKLQSSTQDGSTSSVT. A disordered region spans residues 1 to 36; that stretch reads MFDTTKLQSSTQDGSTSSVTGEPIFGANDPNSELNP. The ABC transporter 1 domain maps to 91–341; that stretch reads LALPGMLIRN…FERLGFECPS (251 aa). Residue asparagine 265 is glycosylated (N-linked (GlcNAc...) asparagine). 6 helical membrane passes run 450–470, 484–504, 530–550, 559–579, 597–617, and 702–722; these read PTIV…SLFF, VVLF…VMTL, VLMD…VFYF, GNFF…SGIF, MIPA…MVPI, and IGIV…TSEY. One can recognise an ABC transporter 2 domain in the interval 786–1029; that stretch reads FHWRNVCYDI…TLVEYFERKA (244 aa). 822-829 serves as a coordination point for ATP; that stretch reads GVSGAGKT. Asparagine 1017 carries N-linked (GlcNAc...) asparagine glycosylation. The tract at residues 1076-1095 is disordered; the sequence is LSRLREHGSQSNSHDSEKSE. 6 helical membrane-spanning segments follow: residues 1135 to 1155, 1166 to 1186, 1215 to 1235, 1251 to 1271, 1279 to 1299, and 1317 to 1337; these read FALC…SPLS, VFQL…QFII, IPYY…PIGL, LMWL…HFCI, AGAN…GALI, and LSYL…VTCA. Residue asparagine 1371 is glycosylated (N-linked (GlcNAc...) asparagine). Residues 1402 to 1422 form a helical membrane-spanning segment; that stretch reads FGIIWVYVIFNISAAITLYWV.

It belongs to the ABC transporter superfamily. ABCG family. PDR (TC 3.A.1.205) subfamily.

It is found in the cell membrane. Functionally, ABC transporter; part of the gene cluster that mediates the biosynthesis of xenovulene A, an unusual meroterpenoid that has potent inhibitory effects on the human gamma-aminobutyrate A (GABAA) benzodiazepine receptor. The chain is ABC transporter asL7 from Sarocladium schorii (Acremonium strictum (strain IMI 501407)).